A 152-amino-acid polypeptide reads, in one-letter code: Deoxyuridine 5'-triphosphate nucleotidohydrolase (152 aa).

Residues 72–74, Asn85, and 89–91 each bind substrate; these read RSG and TID.

This sequence belongs to the dUTPase family. It depends on Mg(2+) as a cofactor.

It catalyses the reaction dUTP + H2O = dUMP + diphosphate + H(+). The protein operates within pyrimidine metabolism; dUMP biosynthesis; dUMP from dCTP (dUTP route): step 2/2. In terms of biological role, this enzyme is involved in nucleotide metabolism: it produces dUMP, the immediate precursor of thymidine nucleotides and it decreases the intracellular concentration of dUTP so that uracil cannot be incorporated into DNA. This Bradyrhizobium sp. (strain ORS 278) protein is Deoxyuridine 5'-triphosphate nucleotidohydrolase.